The primary structure comprises 304 residues: Ornithine carbamoyltransferase (304 aa).

Carbamoyl phosphate contacts are provided by residues 51 to 54, glutamine 78, arginine 102, and 129 to 132; these read STRT and HPVQ. L-ornithine contacts are provided by residues asparagine 157, aspartate 221, and 225–226; that span reads SM. Residues 261–262 and arginine 289 contribute to the carbamoyl phosphate site; that span reads CL.

This sequence belongs to the aspartate/ornithine carbamoyltransferase superfamily. OTCase family.

It is found in the cytoplasm. It catalyses the reaction carbamoyl phosphate + L-ornithine = L-citrulline + phosphate + H(+). It participates in amino-acid degradation; L-arginine degradation via ADI pathway; carbamoyl phosphate from L-arginine: step 2/2. Reversibly catalyzes the transfer of the carbamoyl group from carbamoyl phosphate (CP) to the N(epsilon) atom of ornithine (ORN) to produce L-citrulline. The chain is Ornithine carbamoyltransferase from Campylobacter curvus (strain 525.92).